The sequence spans 227 residues: Phosphoribosylformylglycinamidine synthase subunit PurQ (227 aa).

The 226-residue stretch at 2–227 (RWAIVRFPGA…FLGLVKEVAR (226 aa)) folds into the Glutamine amidotransferase type-1 domain. C85 acts as the Nucleophile in catalysis. Catalysis depends on residues H200 and E202.

Part of the FGAM synthase complex composed of 1 PurL, 1 PurQ and 2 PurS subunits.

Its subcellular location is the cytoplasm. The catalysed reaction is N(2)-formyl-N(1)-(5-phospho-beta-D-ribosyl)glycinamide + L-glutamine + ATP + H2O = 2-formamido-N(1)-(5-O-phospho-beta-D-ribosyl)acetamidine + L-glutamate + ADP + phosphate + H(+). It catalyses the reaction L-glutamine + H2O = L-glutamate + NH4(+). It functions in the pathway purine metabolism; IMP biosynthesis via de novo pathway; 5-amino-1-(5-phospho-D-ribosyl)imidazole from N(2)-formyl-N(1)-(5-phospho-D-ribosyl)glycinamide: step 1/2. In terms of biological role, part of the phosphoribosylformylglycinamidine synthase complex involved in the purines biosynthetic pathway. Catalyzes the ATP-dependent conversion of formylglycinamide ribonucleotide (FGAR) and glutamine to yield formylglycinamidine ribonucleotide (FGAM) and glutamate. The FGAM synthase complex is composed of three subunits. PurQ produces an ammonia molecule by converting glutamine to glutamate. PurL transfers the ammonia molecule to FGAR to form FGAM in an ATP-dependent manner. PurS interacts with PurQ and PurL and is thought to assist in the transfer of the ammonia molecule from PurQ to PurL. This chain is Phosphoribosylformylglycinamidine synthase subunit PurQ, found in Thermus thermophilus (strain ATCC 27634 / DSM 579 / HB8).